Here is a 463-residue protein sequence, read N- to C-terminus: 3-phosphoshikimate 1-carboxyvinyltransferase (463 aa).

Residues lysine 26, serine 27, and arginine 31 each contribute to the 3-phosphoshikimate site. Lysine 26 serves as a coordination point for phosphoenolpyruvate. Phosphoenolpyruvate contacts are provided by glycine 99 and arginine 127. Residues serine 163, serine 164, glutamine 165, serine 188, aspartate 300, and lysine 327 each contribute to the 3-phosphoshikimate site. Glutamine 165 serves as a coordination point for phosphoenolpyruvate. Aspartate 300 (proton acceptor) is an active-site residue. Positions 331 and 372 each coordinate phosphoenolpyruvate.

It belongs to the EPSP synthase family. Monomer.

The protein localises to the cytoplasm. It carries out the reaction 3-phosphoshikimate + phosphoenolpyruvate = 5-O-(1-carboxyvinyl)-3-phosphoshikimate + phosphate. It functions in the pathway metabolic intermediate biosynthesis; chorismate biosynthesis; chorismate from D-erythrose 4-phosphate and phosphoenolpyruvate: step 6/7. In terms of biological role, catalyzes the transfer of the enolpyruvyl moiety of phosphoenolpyruvate (PEP) to the 5-hydroxyl of shikimate-3-phosphate (S3P) to produce enolpyruvyl shikimate-3-phosphate and inorganic phosphate. In Burkholderia pseudomallei (Pseudomonas pseudomallei), this protein is 3-phosphoshikimate 1-carboxyvinyltransferase.